The sequence spans 224 residues: Ribosomal RNA large subunit methyltransferase E (224 aa).

S-adenosyl-L-methionine-binding residues include Gly64, Trp66, Asp97, Asp113, and Asp138. Residue Lys178 is the Proton acceptor of the active site.

Belongs to the class I-like SAM-binding methyltransferase superfamily. RNA methyltransferase RlmE family.

The protein localises to the cytoplasm. It carries out the reaction uridine(2552) in 23S rRNA + S-adenosyl-L-methionine = 2'-O-methyluridine(2552) in 23S rRNA + S-adenosyl-L-homocysteine + H(+). Its function is as follows. Specifically methylates the uridine in position 2552 of 23S rRNA at the 2'-O position of the ribose in the fully assembled 50S ribosomal subunit. This is Ribosomal RNA large subunit methyltransferase E from Albidiferax ferrireducens (strain ATCC BAA-621 / DSM 15236 / T118) (Rhodoferax ferrireducens).